The sequence spans 599 residues: Pentatricopeptide repeat-containing protein At3g62540, mitochondrial (599 aa).

A mitochondrion-targeting transit peptide spans 1-99 (MAAAPWLYLS…RGFSSGSSNV (99 aa)). PPR repeat units lie at residues 194 to 228 (ASRT…GLLT), 230 to 262 (ETFT…KFKI), 263 to 293 (GVET…LKER), 297 to 331 (NMMT…GLKP), 332 to 366 (DIVA…GPCP), 367 to 401 (NVRS…GLQP), 402 to 436 (DAAV…GHPP), 437 to 471 (DGKT…EIEP), 472 to 506 (SIHT…GICP), and 507 to 541 (DDNS…GMKT).

The protein belongs to the PPR family. P subfamily.

The protein resides in the mitochondrion. In Arabidopsis thaliana (Mouse-ear cress), this protein is Pentatricopeptide repeat-containing protein At3g62540, mitochondrial.